The primary structure comprises 251 residues: Imidazole glycerol phosphate synthase subunit HisF (251 aa).

Residues Asp-11 and Asp-130 contribute to the active site.

Belongs to the HisA/HisF family. In terms of assembly, heterodimer of HisH and HisF.

It localises to the cytoplasm. It carries out the reaction 5-[(5-phospho-1-deoxy-D-ribulos-1-ylimino)methylamino]-1-(5-phospho-beta-D-ribosyl)imidazole-4-carboxamide + L-glutamine = D-erythro-1-(imidazol-4-yl)glycerol 3-phosphate + 5-amino-1-(5-phospho-beta-D-ribosyl)imidazole-4-carboxamide + L-glutamate + H(+). It functions in the pathway amino-acid biosynthesis; L-histidine biosynthesis; L-histidine from 5-phospho-alpha-D-ribose 1-diphosphate: step 5/9. Its function is as follows. IGPS catalyzes the conversion of PRFAR and glutamine to IGP, AICAR and glutamate. The HisF subunit catalyzes the cyclization activity that produces IGP and AICAR from PRFAR using the ammonia provided by the HisH subunit. This chain is Imidazole glycerol phosphate synthase subunit HisF, found in Listeria welshimeri serovar 6b (strain ATCC 35897 / DSM 20650 / CCUG 15529 / CIP 8149 / NCTC 11857 / SLCC 5334 / V8).